Here is a 737-residue protein sequence, read N- to C-terminus: Autolysin (737 aa).

Residues 1–13 (MKKESMSRIERRK) show a composition bias toward basic and acidic residues. 3 disordered regions span residues 1 to 28 (MKKESMSRIERRKAQQRKKTPVQWKKST), 51 to 132 (AEAT…TDSS), and 335 to 360 (PSSGGNTGGGTVNPGTGGSNNQSGTN). An N-terminal signal peptide occupies residues 1–53 (MKKESMSRIERRKAQQRKKTPVQWKKSTTLFSSALIVSSVGTPVALLPVTAEA). Over residues 67 to 117 (PTTETGLVETPTTETTPGTTEQPTTDSSTTTESTTESSKETPTTPSTEQPT) the composition is skewed to low complexity. Positions 118 to 132 (ADSTTPVESGTTDSS) are enriched in polar residues. Residues 339 to 352 (GNTGGGTVNPGTGG) are compositionally biased toward gly residues. In terms of domain architecture, LysM 1 spans 361-404 (TYYTVKSGDTLNKIAAQYGVSVANLRSWNGISGDLIFVGQKLIV). The segment at 409 to 429 (SGNTGGSGSGGSNNNQSGTNT) is disordered. Residues 410 to 419 (GNTGGSGSGG) are compositionally biased toward gly residues. A compositionally biased stretch (low complexity) spans 420–429 (SNNNQSGTNT). 5 LysM domains span residues 429 to 472 (TYYT…KLIV), 497 to 540 (TYYT…KIIV), 565 to 608 (TYYT…KIIV), 631 to 674 (TSYT…TIIV), and 693 to 736 (KRHT…TLKV).

Belongs to the glycosyl hydrolase 73 family.

The protein localises to the secreted. In terms of biological role, hydrolyzes the cell wall of E.faecalis and M.lysodeikticus. May play an important role in cell wall growth and cell separation. This chain is Autolysin, found in Enterococcus faecalis (strain ATCC 700802 / V583).